The chain runs to 880 residues: Tyrosine-protein kinase receptor TYRO3 (880 aa).

A signal peptide spans 1–28 (MVYPGPPGLIAGLLLAALSLSCVDGAKA). 2 consecutive Ig-like C2-type domains span residues 29-114 (LGFV…KSVS) and 125-206 (PYFT…AIVE). The Extracellular segment spans residues 29–414 (LGFVGHGYNL…QRHPHTRMSW (386 aa)). Asparagine 37 and asparagine 49 each carry an N-linked (GlcNAc...) asparagine glycan. Cysteine 50 and cysteine 103 form a disulfide bridge. N-linked (GlcNAc...) asparagine glycosylation is present at asparagine 143. Cysteine 146 and cysteine 189 form a disulfide bridge. Fibronectin type-III domains lie at 213–306 (PPFN…TKET) and 311–401 (LPQN…SKEE). Asparagine 216, asparagine 279, asparagine 351, and asparagine 365 each carry an N-linked (GlcNAc...) asparagine glycan. A helical transmembrane segment spans residues 415 to 435 (VPMVLGILTALVTVVAMTLIF). At 436–880 (LRKGRKETRF…MQEEQVVITL (445 aa)) the chain is on the cytoplasmic side. One can recognise a Protein kinase domain in the interval 503–774 (FTLGRTLGKG…VDLKQRLEAI (272 aa)). ATP-binding positions include 509 to 517 (LGKGEFGSV) and lysine 535. The Proton acceptor role is filled by aspartate 640. Residue tyrosine 671 is modified to Phosphotyrosine; by autocatalysis. Positions 846-880 (EWSSSAQNGEARGLLHEEEEEEEEEMQEEQVVITL) are disordered. Over residues 862-873 (EEEEEEEEEMQE) the composition is skewed to acidic residues.

Belongs to the protein kinase superfamily. Tyr protein kinase family. AXL/UFO subfamily. In terms of processing, tyrosine phosphorylated upon receptor stimulation. Detected in brain, spinal cord, intestine, lung, stomach, ovary, testis, skin and eye.

The protein resides in the cell membrane. The catalysed reaction is L-tyrosyl-[protein] + ATP = O-phospho-L-tyrosyl-[protein] + ADP + H(+). May be involved in cell adhesion processes, particularly in the central nervous system. In Xenopus laevis (African clawed frog), this protein is Tyrosine-protein kinase receptor TYRO3 (tyro3).